A 427-amino-acid chain; its full sequence is Phosphoglucosamine mutase (427 aa).

The active-site Phosphoserine intermediate is the S94. Residues S94, D228, D230, and D232 each contribute to the Mg(2+) site. Residue S94 is modified to Phosphoserine.

The protein belongs to the phosphohexose mutase family. The cofactor is Mg(2+). Post-translationally, activated by phosphorylation.

The catalysed reaction is alpha-D-glucosamine 1-phosphate = D-glucosamine 6-phosphate. Catalyzes the conversion of glucosamine-6-phosphate to glucosamine-1-phosphate. In Thermotoga sp. (strain RQ2), this protein is Phosphoglucosamine mutase.